A 624-amino-acid polypeptide reads, in one-letter code: ATP-dependent RNA helicase MRH4, mitochondrial (624 aa).

Residues 1–43 constitute a mitochondrion transit peptide; that stretch reads MSPVASTCLLCEMRTVVWGWQPAVPQPWHFVRFASSARLARRK. Residues 41–120 are disordered; the sequence is RRKPARMALS…KDAADKKQDG (80 aa). Positions 86–119 are enriched in basic and acidic residues; it reads RLPDRPIPRSDAELKRSSSDLNNKEKDAADKKQD. Residues 151–184 carry the Q motif motif; sequence TSFDQFPLLPQVREAVYANAFPTLTEISPTPIQR. The Helicase ATP-binding domain maps to 212–427; that stretch reads EEELFHFDQF…EKKFPEMKRL (216 aa). 225-232 contacts ATP; it reads AETGTGKT. The DEAD box signature appears at 374-377; the sequence is DEAD. The 187-residue stretch at 438–624 folds into the Helicase C-terminal domain; that stretch reads RVQLGVVDVD…EAMFRGQALI (187 aa).

This sequence belongs to the DEAD box helicase family. MRH4 subfamily.

It is found in the mitochondrion. It catalyses the reaction ATP + H2O = ADP + phosphate + H(+). Its function is as follows. ATP-binding RNA helicase involved in mitochondrial RNA metabolism. Required for maintenance of mitochondrial DNA. This is ATP-dependent RNA helicase MRH4, mitochondrial (MRH4) from Ajellomyces capsulatus (strain NAm1 / WU24) (Darling's disease fungus).